Consider the following 382-residue polypeptide: Probable purine permease 4 (382 aa).

A run of 10 helical transmembrane segments spans residues 25 to 45, 62 to 82, 98 to 118, 121 to 141, 150 to 170, 185 to 205, 224 to 244, 260 to 280, 291 to 311, and 315 to 335; these read LTLL…SSLL, WVQS…HYVL, LIFS…FSWG, YLPV…TLIL, ITFS…LLAL, YFIG…YLPV, LVME…EGGF, TFYW…SFAA, ITGG…GVVA, and VFGG…SSYT. Residues 66–170 enclose the EamA domain; sequence AGFPLLLILI…LTLSSVLLAL (105 aa). Residues 345–364 are disordered; sequence EEKEKGEYSGVKTTEDSGEM.

Belongs to the purine permeases (TC 2.A.7.14) family.

The protein resides in the membrane. The protein is Probable purine permease 4 (PUP4) of Arabidopsis thaliana (Mouse-ear cress).